A 384-amino-acid chain; its full sequence is Dual specificity protein phosphatase 9 (384 aa).

Ser16 is subject to Phosphoserine. A Rhodanese domain is found at 18–139 (PRPRLLLLDC…FQAECPHLCE (122 aa)). A Tyrosine-protein phosphatase domain is found at 203–346 (FPVQILPNLY…LLDFERSLRL (144 aa)). Ser262 carries the phosphoserine modification. The active-site Phosphocysteine intermediate is the Cys290. Residues 348–384 (ERHSQEQGSGGQASAASNPPSFFTTPTSDGAFELAPT) are disordered. Ser351 carries the phosphoserine modification. Positions 359-375 (QASAASNPPSFFTTPTS) are enriched in polar residues.

It belongs to the protein-tyrosine phosphatase family. Non-receptor class dual specificity subfamily.

It is found in the cytoplasm. The catalysed reaction is O-phospho-L-tyrosyl-[protein] + H2O = L-tyrosyl-[protein] + phosphate. It catalyses the reaction O-phospho-L-seryl-[protein] + H2O = L-seryl-[protein] + phosphate. The enzyme catalyses O-phospho-L-threonyl-[protein] + H2O = L-threonyl-[protein] + phosphate. Inactivates MAP kinases. Has a specificity for the ERK family. The chain is Dual specificity protein phosphatase 9 (DUSP9) from Homo sapiens (Human).